The chain runs to 352 residues: DNA integrity scanning protein DisA (352 aa).

The region spanning 3-143 is the DAC domain; it reads PQELIEKIKL…NYKYVVNQVD (141 aa). ATP-binding positions include Gly-71, Leu-89, and 102-106; that span reads TRHRT.

It belongs to the DisA family. Homooctamer. Mg(2+) serves as cofactor.

The catalysed reaction is 2 ATP = 3',3'-c-di-AMP + 2 diphosphate. Participates in a DNA-damage check-point. DisA forms globular foci that rapidly scan along the chromosomes searching for lesions. Functionally, also has diadenylate cyclase activity, catalyzing the condensation of 2 ATP molecules into cyclic di-AMP (c-di-AMP). c-di-AMP likely acts as a signaling molecule that may couple DNA integrity with a cellular process. The chain is DNA integrity scanning protein DisA from Thermotoga neapolitana (strain ATCC 49049 / DSM 4359 / NBRC 107923 / NS-E).